The following is a 65-amino-acid chain: UPF0434 protein Rpal_0270 (65 aa).

This sequence belongs to the UPF0434 family.

The protein is UPF0434 protein Rpal_0270 of Rhodopseudomonas palustris (strain TIE-1).